A 560-amino-acid polypeptide reads, in one-letter code: Diphtheria toxin homolog CRM228 (560 aa).

Positions 1 to 25 (MSRKLFASILIGALLGIGAPPSAHA) are cleaved as a signal peptide. NAD(+) contacts are provided by histidine 46 and tyrosine 90. The active site involves glutamate 173. Intrachain disulfides connect cysteine 211/cysteine 226 and cysteine 486/cysteine 496.

In Corynebacterium diphtheriae, this protein is Diphtheria toxin homolog CRM228.